The following is a 315-amino-acid chain: MANLKEIRDRIKSVKNTRKITEAMRLVAAAKVRRAQDLVLRSRPFADRLARVLESLQSRIALESADTPLLQARDPRHITLVAMTGDRGLCGGFNANIIKRTEQRFAELKASGYEVALITVGRKVDTYFQNRNYPITASFTGLDQLPTSTDALQVSDAVQAEFLGGATDRVELIYTKFINLVSTKPVSQTLLPLDPQGIASPDDEIFRFVTKEGELGVERSSASNQEDKLKSDLVFEQSPSQLLDVLLPLYLQNQVLRSLQESAASELASRMTAMNNASDNAKALAKELTLDYNKARQAAITQEILEVVGGASAMA.

The protein belongs to the ATPase gamma chain family. In terms of assembly, F-type ATPases have 2 components, CF(1) - the catalytic core - and CF(0) - the membrane proton channel. CF(1) has five subunits: alpha(3), beta(3), gamma(1), delta(1), epsilon(1). CF(0) has three main subunits: a, b and c.

The protein resides in the cellular thylakoid membrane. In terms of biological role, produces ATP from ADP in the presence of a proton gradient across the membrane. The gamma chain is believed to be important in regulating ATPase activity and the flow of protons through the CF(0) complex. This chain is ATP synthase gamma chain, found in Synechococcus sp. (strain RCC307).